A 203-amino-acid polypeptide reads, in one-letter code: Early nodulin-like protein 9 (203 aa).

Positions 1–27 are cleaved as a signal peptide; it reads MARNLKSMMLCGFGLLCFLMIVDRAYA. Residues 28 to 130 form the Phytocyanin domain; sequence REFTVGGATG…NEKLVVIVMA (103 aa). C84 and C118 are joined by a disulfide. A glycan (N-linked (GlcNAc...) asparagine) is linked at N103. The interval 134 to 181 is disordered; that stretch reads GNKNTASSPPSPAPAPSGESAPSPPVSGTFEMTPAPTPTTSEDTPNSA. The GPI-anchor amidated serine moiety is linked to residue S180. Residues 181-203 constitute a propeptide, removed in mature form; the sequence is AASSLSFVAALLGAALASTLFLH.

The protein belongs to the early nodulin-like (ENODL) family. Specifically observed at the plasma membrane of sieve elements in vascular tissues of leaves, stems, roots, flowers and reproductive organs. Absent from companion cells.

It is found in the cell membrane. Functionally, may act as a carbohydrate transporter. Mainly required for reproductive functions. This is Early nodulin-like protein 9 from Arabidopsis thaliana (Mouse-ear cress).